Here is a 122-residue protein sequence, read N- to C-terminus: Ribosome-binding factor A (122 aa).

The protein belongs to the RbfA family. In terms of assembly, monomer. Binds 30S ribosomal subunits, but not 50S ribosomal subunits or 70S ribosomes.

Its subcellular location is the cytoplasm. In terms of biological role, one of several proteins that assist in the late maturation steps of the functional core of the 30S ribosomal subunit. Associates with free 30S ribosomal subunits (but not with 30S subunits that are part of 70S ribosomes or polysomes). Required for efficient processing of 16S rRNA. May interact with the 5'-terminal helix region of 16S rRNA. The chain is Ribosome-binding factor A from Dichelobacter nodosus (strain VCS1703A).